The following is a 467-amino-acid chain: Methylenetetrahydrofolate--tRNA-(uracil-5-)-methyltransferase TrmFO (467 aa).

10 to 15 (GAGLAG) contributes to the FAD binding site.

It belongs to the MnmG family. TrmFO subfamily. FAD serves as cofactor.

It is found in the cytoplasm. It catalyses the reaction uridine(54) in tRNA + (6R)-5,10-methylene-5,6,7,8-tetrahydrofolate + NADH + H(+) = 5-methyluridine(54) in tRNA + (6S)-5,6,7,8-tetrahydrofolate + NAD(+). It carries out the reaction uridine(54) in tRNA + (6R)-5,10-methylene-5,6,7,8-tetrahydrofolate + NADPH + H(+) = 5-methyluridine(54) in tRNA + (6S)-5,6,7,8-tetrahydrofolate + NADP(+). In terms of biological role, catalyzes the folate-dependent formation of 5-methyl-uridine at position 54 (M-5-U54) in all tRNAs. The sequence is that of Methylenetetrahydrofolate--tRNA-(uracil-5-)-methyltransferase TrmFO from Prochlorococcus marinus (strain MIT 9515).